Here is a 265-residue protein sequence, read N- to C-terminus: Histidine racemase (265 aa).

Cysteine 67 acts as the Proton acceptor in catalysis. The Proton donor role is filled by cysteine 209.

This sequence belongs to the histidine racemase family. Homodimer.

The enzyme catalyses L-histidine = D-histidine. Its activity is regulated as follows. Activity is not affected by buffer composition (PO(4) or Tris), ions (SO(4)(2-), Mg(2+) and EDTA) or the PLP inhibitor hydroxylamine. However, the activity is hindered by iodoacetamide and Hg(2+), which are known inhibitors of enzymes with catalytic thiols. In terms of biological role, cofactor-independent isomerase that catalyzes the reversible conversion of L-histidine to D-histidine. Shows weak activity with L,L-lanthionine. The catalytic turnover is 10'000-fold faster with L-histidine than with L,L-lanthionine. May play a role in growth of F.nucleatum. In Fusobacterium nucleatum subsp. nucleatum (strain ATCC 25586 / DSM 15643 / BCRC 10681 / CIP 101130 / JCM 8532 / KCTC 2640 / LMG 13131 / VPI 4355), this protein is Histidine racemase.